The following is a 281-amino-acid chain: Digeranylgeranylglyceryl phosphate synthase (281 aa).

A run of 5 helical transmembrane segments spans residues 88 to 108 (IALSLFGIALSIFLGFIEFLI), 132 to 152 (ALVSLGVAFTLIFGSLAAGNL), 200 to 220 (GILVFLLSLATVVLTILPVIF), 225 to 245 (IIYLSLSVIISLPILMLASAI), and 261 to 281 (LIKVSMFLGLLGMLLDPFRVV).

It belongs to the UbiA prenyltransferase family. DGGGP synthase subfamily. It depends on Mg(2+) as a cofactor.

Its subcellular location is the cell membrane. It carries out the reaction sn-3-O-(geranylgeranyl)glycerol 1-phosphate + (2E,6E,10E)-geranylgeranyl diphosphate = 2,3-bis-O-(geranylgeranyl)-sn-glycerol 1-phosphate + diphosphate. It functions in the pathway membrane lipid metabolism; glycerophospholipid metabolism. Its function is as follows. Prenyltransferase that catalyzes the transfer of the geranylgeranyl moiety of geranylgeranyl diphosphate (GGPP) to the C2 hydroxyl of (S)-3-O-geranylgeranylglyceryl phosphate (GGGP). This reaction is the second ether-bond-formation step in the biosynthesis of archaeal membrane lipids. This Korarchaeum cryptofilum (strain OPF8) protein is Digeranylgeranylglyceryl phosphate synthase.